The sequence spans 157 residues: Molybdopterin synthase catalytic subunit (157 aa).

Substrate contacts are provided by residues 103-104 (HR), lysine 119, and 126-128 (KKE).

This sequence belongs to the MoaE family. MOCS2B subfamily. As to quaternary structure, heterotetramer; composed of 2 small (MOCS2A) and 2 large (MOCS2B) subunits.

It is found in the cytoplasm. It catalyses the reaction 2 [molybdopterin-synthase sulfur-carrier protein]-C-terminal-Gly-aminoethanethioate + cyclic pyranopterin phosphate + H2O = molybdopterin + 2 [molybdopterin-synthase sulfur-carrier protein]-C-terminal Gly-Gly + 2 H(+). Its pathway is cofactor biosynthesis; molybdopterin biosynthesis. Functionally, catalytic subunit of the molybdopterin synthase complex, a complex that catalyzes the conversion of precursor Z into molybdopterin. Acts by mediating the incorporation of 2 sulfur atoms from thiocarboxylated MOCS2A into precursor Z to generate a dithiolene group. The chain is Molybdopterin synthase catalytic subunit from Culex quinquefasciatus (Southern house mosquito).